Reading from the N-terminus, the 211-residue chain is Arginine exporter protein ArgO (211 aa).

6 helical membrane passes run 1–21 (MISY…PLGP), 37–57 (LMIA…GIFG), 68–88 (LLAL…FGAL), 111–131 (IIAT…DTFV), 147–167 (WFAL…ALLA), and 179–199 (AQRI…FQLA).

Belongs to the LysE/ArgO transporter (TC 2.A.75) family.

It localises to the cell inner membrane. The catalysed reaction is L-arginine(in) = L-arginine(out). In terms of biological role, involved in the export of arginine. Important to control the intracellular level of arginine and the correct balance between arginine and lysine. This chain is Arginine exporter protein ArgO, found in Salmonella paratyphi C (strain RKS4594).